Consider the following 398-residue polypeptide: Fructose-bisphosphate aldolase 2, chloroplastic (398 aa).

Residues methionine 1–arginine 46 constitute a chloroplast transit peptide. Substrate is bound at residue arginine 95. Position 157 is a phosphoserine (serine 157). Lysine 185 contacts substrate. Serine 215 bears the Phosphoserine mark. Residue glutamate 225 is the Proton acceptor of the active site. Catalysis depends on lysine 267, which acts as the Schiff-base intermediate with dihydroxyacetone-P. Residue serine 309–glycine 311 participates in substrate binding. At lysine 394 the chain carries N6,N6,N6-trimethyllysine.

It belongs to the class I fructose-bisphosphate aldolase family. Homotetramer. In terms of processing, can be trimethylated at Lys-394 by LSMT-L. The methylation level has no influence on the ologomerization state or on the kinetic properties of the enzyme. Post-translationally, phosphorylated on tyrosine residues in response to abscisic acid (ABA) in germinating seeds. Highly expressed in rosettes leaves.

It is found in the plastid. Its subcellular location is the chloroplast. The protein localises to the plastoglobule. It localises to the chloroplast stroma. It catalyses the reaction beta-D-fructose 1,6-bisphosphate = D-glyceraldehyde 3-phosphate + dihydroxyacetone phosphate. It participates in carbohydrate degradation; glycolysis; D-glyceraldehyde 3-phosphate and glycerone phosphate from D-glucose: step 4/4. Plays a key role in glycolysis and gluconeogenesis. This is Fructose-bisphosphate aldolase 2, chloroplastic from Arabidopsis thaliana (Mouse-ear cress).